A 29-amino-acid chain; its full sequence is Conotoxin SIVC (29 aa).

Ala-1 bears the N-acetylalanine; partial mark. Pro-2 bears the 4-hydroxyproline mark. O-linked (HexNAc...) threonine glycosylation is found at Thr-7 and Thr-9. 2 positions are modified to 4-hydroxyproline: Pro-18 and Pro-22. Cys-29 bears the Cysteine amide mark.

This sequence belongs to the conotoxin A superfamily. O-linked glycans consist of Hex4-HexNAc2 hexasaccharides. In terms of processing, N-terminus is found to be free and N-acetylated, depending on the fraction studied. Post-translationally, contains 3 disulfide bonds. As to expression, expressed by the venom duct. Low expression in the distal venom duct sections.

It localises to the secreted. Functionally, probable neurotoxin with ion channel inhibitor activity. This is Conotoxin SIVC from Conus striatus (Striated cone).